Reading from the N-terminus, the 66-residue chain is Ribosome biogenesis protein Nop10 (66 aa).

Belongs to the NOP10 family.

Its function is as follows. Involved in ribosome biogenesis; more specifically in 18S rRNA pseudouridylation and in cleavage of pre-rRNA. The chain is Ribosome biogenesis protein Nop10 from Staphylothermus marinus (strain ATCC 43588 / DSM 3639 / JCM 9404 / F1).